The following is a 122-amino-acid chain: Large ribosomal subunit protein uL14 (122 aa).

The protein belongs to the universal ribosomal protein uL14 family. In terms of assembly, part of the 50S ribosomal subunit. Forms a cluster with proteins L3 and L19. In the 70S ribosome, L14 and L19 interact and together make contacts with the 16S rRNA in bridges B5 and B8.

Functionally, binds to 23S rRNA. Forms part of two intersubunit bridges in the 70S ribosome. This Herpetosiphon aurantiacus (strain ATCC 23779 / DSM 785 / 114-95) protein is Large ribosomal subunit protein uL14.